Consider the following 142-residue polypeptide: Peptide methionine sulfoxide reductase MsrB (142 aa).

The region spanning 2–125 (LKKDKSELTD…NSAAIQFIPY (124 aa)) is the MsrB domain. Cys114 acts as the Nucleophile in catalysis.

This sequence belongs to the MsrB Met sulfoxide reductase family.

The enzyme catalyses L-methionyl-[protein] + [thioredoxin]-disulfide + H2O = L-methionyl-(R)-S-oxide-[protein] + [thioredoxin]-dithiol. The polypeptide is Peptide methionine sulfoxide reductase MsrB (Staphylococcus aureus (strain Mu3 / ATCC 700698)).